The chain runs to 61 residues: Small ribosomal subunit protein uS14 (61 aa).

Zn(2+) is bound by residues C24, C27, C40, and C43.

Belongs to the universal ribosomal protein uS14 family. Zinc-binding uS14 subfamily. In terms of assembly, part of the 30S ribosomal subunit. Contacts proteins S3 and S10. Zn(2+) serves as cofactor.

In terms of biological role, binds 16S rRNA, required for the assembly of 30S particles and may also be responsible for determining the conformation of the 16S rRNA at the A site. The polypeptide is Small ribosomal subunit protein uS14 (Mycoplasma genitalium (strain ATCC 33530 / DSM 19775 / NCTC 10195 / G37) (Mycoplasmoides genitalium)).